A 505-amino-acid chain; its full sequence is Pleckstrin homology domain-containing family D member 1 (505 aa).

Positions 28-136 constitute a PH domain; sequence KVQLYGVLWK…WLEMLQESGK (109 aa). Residues 146–391 adopt a coiled-coil conformation; sequence EAMIKSLEAQ…KVRNKEKEER (246 aa). Residues 264 to 284 are disordered; sequence DKNQPQPLTNQSEQPPASDGL. Positions 267–278 are enriched in polar residues; it reads QPQPLTNQSEQP. Arg502 is modified (omega-N-methylarginine).

This sequence belongs to the PLEKHD1 family.

This is Pleckstrin homology domain-containing family D member 1 (Plekhd1) from Mus musculus (Mouse).